The primary structure comprises 723 residues: Tripartite motif-containing protein 42 (723 aa).

An RING-type zinc finger spans residues 146–192 (CPMCNRLRLHSFMLPCNHSLCEKCLRQLQKHAEVTENFFILICPMCS). 2 consecutive B box-type zinc fingers follow at residues 235-280 (PILC…FVDT) and 285-326 (QDEK…TVSL). Zn(2+)-binding residues include C290, H293, C313, and H318. The stretch at 382–412 (KLRAILQEKEKIIMEQIENLEVSRQKEIEKY) forms a coiled coil. A COS domain is found at 434-492 (LKETGQVAFLQSAKILVDQIEEGIQNTFRPDPQLRLHSLHCIPLDFAELSNAIHELFPT). The Fibronectin type-III domain maps to 603-701 (TPGPIVIYQT…DICKVVTPDG (99 aa)).

It belongs to the TRIM/RBCC family.

The sequence is that of Tripartite motif-containing protein 42 (Trim42) from Mus musculus (Mouse).